The primary structure comprises 130 residues: Sec-independent protein translocase protein TatB (130 aa).

A helical transmembrane segment spans residues 2–22 (FANIGWGEMLVLVVVGLVVLG). A disordered region spans residues 108 to 130 (DAVASAQEAPDEPVRPPFDSDAT).

Belongs to the TatB family. In terms of assembly, the Tat system comprises two distinct complexes: a TatABC complex, containing multiple copies of TatA, TatB and TatC subunits, and a separate TatA complex, containing only TatA subunits. Substrates initially bind to the TatABC complex, which probably triggers association of the separate TatA complex to form the active translocon.

The protein localises to the cell membrane. In terms of biological role, part of the twin-arginine translocation (Tat) system that transports large folded proteins containing a characteristic twin-arginine motif in their signal peptide across membranes. Together with TatC, TatB is part of a receptor directly interacting with Tat signal peptides. TatB may form an oligomeric binding site that transiently accommodates folded Tat precursor proteins before their translocation. In Mycobacterium ulcerans (strain Agy99), this protein is Sec-independent protein translocase protein TatB.